A 313-amino-acid chain; its full sequence is Putative glycosyltransferase ORF313 (313 aa).

This sequence belongs to the glycosyltransferase group 1 family. Glycosyltransferase 4 subfamily.

The chain is Putative glycosyltransferase ORF313 from Acidianus hospitalis (AFV-1).